A 337-amino-acid polypeptide reads, in one-letter code: MIEADRLIAPAAITEEEQLDRAIRPKMLSDYRGQDQVRSQMEIFIEAARRRSEALDHVLIFGPPGLGKTTLANIVANEMGVNIKTTSGPVLEKAGDLAALLTNLEPHDVLFIDEIHRLSPVVEEVLYPAMEDYQLDIMIGEGPAARSIKLELPPFTLIGATTRAGSLTSPLRDRFGIVQRLEFYKVEDLAHIVGRSADVLGLSLDQQGAFEIAKRARGTPRIANRLLRRVRDFAEIRSDGHISDQIAAQALDMLDVDNAGFDYMDRKLLLAIIDKFLGGPVGVDNLAAAIGEEKETIEDVLEPYLIQQGFLQRTPRGRIATPRAYLHFGLTTPERQG.

The interval 4-184 (ADRLIAPAAI…FGIVQRLEFY (181 aa)) is large ATPase domain (RuvB-L). ATP contacts are provided by residues Ile-23, Arg-24, Gly-65, Lys-68, Thr-69, Thr-70, 131–133 (EDY), Arg-174, Tyr-184, and Arg-221. Thr-69 provides a ligand contact to Mg(2+). Residues 185–255 (KVEDLAHIVG…IAAQALDMLD (71 aa)) are small ATPAse domain (RuvB-S). The interval 258–337 (NAGFDYMDRK…FGLTTPERQG (80 aa)) is head domain (RuvB-H). The DNA site is built by Arg-313 and Arg-318.

Belongs to the RuvB family. Homohexamer. Forms an RuvA(8)-RuvB(12)-Holliday junction (HJ) complex. HJ DNA is sandwiched between 2 RuvA tetramers; dsDNA enters through RuvA and exits via RuvB. An RuvB hexamer assembles on each DNA strand where it exits the tetramer. Each RuvB hexamer is contacted by two RuvA subunits (via domain III) on 2 adjacent RuvB subunits; this complex drives branch migration. In the full resolvosome a probable DNA-RuvA(4)-RuvB(12)-RuvC(2) complex forms which resolves the HJ.

It is found in the cytoplasm. It catalyses the reaction ATP + H2O = ADP + phosphate + H(+). In terms of biological role, the RuvA-RuvB-RuvC complex processes Holliday junction (HJ) DNA during genetic recombination and DNA repair, while the RuvA-RuvB complex plays an important role in the rescue of blocked DNA replication forks via replication fork reversal (RFR). RuvA specifically binds to HJ cruciform DNA, conferring on it an open structure. The RuvB hexamer acts as an ATP-dependent pump, pulling dsDNA into and through the RuvAB complex. RuvB forms 2 homohexamers on either side of HJ DNA bound by 1 or 2 RuvA tetramers; 4 subunits per hexamer contact DNA at a time. Coordinated motions by a converter formed by DNA-disengaged RuvB subunits stimulates ATP hydrolysis and nucleotide exchange. Immobilization of the converter enables RuvB to convert the ATP-contained energy into a lever motion, pulling 2 nucleotides of DNA out of the RuvA tetramer per ATP hydrolyzed, thus driving DNA branch migration. The RuvB motors rotate together with the DNA substrate, which together with the progressing nucleotide cycle form the mechanistic basis for DNA recombination by continuous HJ branch migration. Branch migration allows RuvC to scan DNA until it finds its consensus sequence, where it cleaves and resolves cruciform DNA. This is Holliday junction branch migration complex subunit RuvB from Tolumonas auensis (strain DSM 9187 / NBRC 110442 / TA 4).